A 600-amino-acid chain; its full sequence is Zinc finger and BTB domain-containing protein 46 (600 aa).

The BTB domain occupies 31–99; the sequence is CDACVVVEGK…MYSAHLALTS (69 aa). The tract at residues 173 to 222 is disordered; it reads RRTSPANSSGDSAIASCHEGGSSYGKEDQEPKADGPDDVSSQSLWPGDVG. The span at 197–207 shows a compositional bias: basic and acidic residues; sequence GKEDQEPKADG. A Glycyl lysine isopeptide (Lys-Gly) (interchain with G-Cter in SUMO2) cross-link involves residue K229. S234 carries the post-translational modification Phosphoserine. The disordered stretch occupies residues 235-278; it reads PSHYGGSELPSSKDTAIQNSLSEQGSGDGWQPTGRRKNRKNKET. Polar residues predominate over residues 243–259; that stretch reads LPSSKDTAIQNSLSEQG. 2 consecutive C2H2-type zinc fingers follow at residues 418 to 436 and 446 to 468; these read FKCPYCSFSAMHQCILKRH and YPCEICGKKFTRREHMKRHTLVH. Residues 513–600 are disordered; sequence LDHGGGGEGS…EPDKDFAWIS (88 aa). Over residues 533-555 the composition is skewed to acidic residues; sequence YLEDPDDPRGEAEEELVEDEDED. Basic and acidic residues-rich tracts occupy residues 556 to 574 and 591 to 600; these read VAKWKDDVGLAHEDALLGD and EPDKDFAWIS.

Post-translationally, sumoylated. Desumoylation by DESI1 reverses transcriptional repression activity.

It localises to the nucleus. In terms of biological role, functions as a transcriptional repressor for PRDM1. This is Zinc finger and BTB domain-containing protein 46 (Zbtb46) from Mus musculus (Mouse).